Reading from the N-terminus, the 464-residue chain is Glutamate--tRNA ligase (464 aa).

The short motif at 10-20 is the 'HIGH' region element; the sequence is PSPTGYLHIGG. Residues 113-130 are compositionally biased toward basic and acidic residues; the sequence is QEAKKEKPRYDGRWRPEA. The interval 113–142 is disordered; sequence QEAKKEKPRYDGRWRPEAGKALPVPPTDVP. Residues 242–246 carry the 'KMSKS' region motif; it reads KLSKR. Position 245 (Lys245) interacts with ATP.

The protein belongs to the class-I aminoacyl-tRNA synthetase family. Glutamate--tRNA ligase type 1 subfamily. In terms of assembly, monomer.

Its subcellular location is the cytoplasm. The catalysed reaction is tRNA(Glu) + L-glutamate + ATP = L-glutamyl-tRNA(Glu) + AMP + diphosphate. In terms of biological role, catalyzes the attachment of glutamate to tRNA(Glu) in a two-step reaction: glutamate is first activated by ATP to form Glu-AMP and then transferred to the acceptor end of tRNA(Glu). This is Glutamate--tRNA ligase from Dechloromonas aromatica (strain RCB).